A 324-amino-acid polypeptide reads, in one-letter code: Probable 6-phosphogluconolactonase 4, chloroplastic (324 aa).

Residues 1–61 (MSVSAAVAAA…RAPAMATDCA (61 aa)) constitute a chloroplast transit peptide. Residues 20-43 (RRRSPPASRVAATSRGRPFSSGPH) form a disordered region. A compositionally biased stretch (low complexity) spans 24-34 (PPASRVAATSR).

It belongs to the glucosamine/galactosamine-6-phosphate isomerase family. 6-phosphogluconolactonase subfamily.

It is found in the plastid. The protein resides in the chloroplast. It catalyses the reaction 6-phospho-D-glucono-1,5-lactone + H2O = 6-phospho-D-gluconate + H(+). It functions in the pathway carbohydrate degradation; pentose phosphate pathway; D-ribulose 5-phosphate from D-glucose 6-phosphate (oxidative stage): step 2/3. Hydrolysis of 6-phosphogluconolactone to 6-phosphogluconate. In Oryza sativa subsp. indica (Rice), this protein is Probable 6-phosphogluconolactonase 4, chloroplastic.